The following is a 466-amino-acid chain: Asparagine--tRNA ligase (466 aa).

It belongs to the class-II aminoacyl-tRNA synthetase family. Homodimer.

The protein localises to the cytoplasm. The catalysed reaction is tRNA(Asn) + L-asparagine + ATP = L-asparaginyl-tRNA(Asn) + AMP + diphosphate + H(+). This is Asparagine--tRNA ligase from Shewanella oneidensis (strain ATCC 700550 / JCM 31522 / CIP 106686 / LMG 19005 / NCIMB 14063 / MR-1).